Consider the following 138-residue polypeptide: Rapid alkalinization factor 23 (138 aa).

A signal peptide spans 1-28 (MRGLSRNSGAAAIFAILLILAVHNWSVA). Residues 29–88 (VSSQSTEFAGDFPPFETECRGTIAECSVSAALGDGGDLFYGGGEMGEEFEMDSEINRRIL) constitute a propeptide, removed in mature form. 2 disulfides stabilise this stretch: C106–C116 and C129–C135.

Belongs to the plant rapid alkalinization factor (RALF) family. In terms of processing, proteolytically cleaved, probably by SBT6.1 (S1P), a subtilisin-like serine protease (subtilase).

It is found in the secreted. Its function is as follows. Cell signaling peptide that may regulate plant stress, growth, and development. Mediates a rapid alkalinization of extracellular space by mediating a transient increase in the cytoplasmic Ca(2+) concentration leading to a calcium-dependent signaling events through a cell surface receptor and a concomitant activation of some intracellular mitogen-activated protein kinases. Negatively regulates brassinolide (BL)-mediated signaling pathway (e.g. BL-induced hypocotyl elongation and branching limitation). This chain is Rapid alkalinization factor 23 (RALF23), found in Arabidopsis thaliana (Mouse-ear cress).